Reading from the N-terminus, the 130-residue chain is MAQKIRKSTFKKDKNSSINGVVHIQSTFNNTIVTITNITGDTISWASAGSSGFKGARKGTPFAAQTAAEKAALDALSKGMKSVEVLVKGQGSGRETAIRSIEGAGFEVTSIQDITPVPHNGCRPPKRRRV.

The protein belongs to the universal ribosomal protein uS11 family. Part of the 30S ribosomal subunit.

It localises to the plastid. The protein resides in the chloroplast. The chain is Small ribosomal subunit protein uS11c from Trieres chinensis (Marine centric diatom).